We begin with the raw amino-acid sequence, 133 residues long: Small ribosomal subunit protein bS6 (133 aa).

This sequence belongs to the bacterial ribosomal protein bS6 family.

Functionally, binds together with bS18 to 16S ribosomal RNA. In Chlorobium limicola (strain DSM 245 / NBRC 103803 / 6330), this protein is Small ribosomal subunit protein bS6.